The chain runs to 308 residues: UPF0026 protein HP_0117 (308 aa).

The region spanning 18 to 248 is the Radical SAM core domain; it reads FGKSLGVDLS…SLPKRSITQA (231 aa). [4Fe-4S] cluster is bound by residues C33, C37, and C40.

Belongs to the UPF0026 family. [4Fe-4S] cluster serves as cofactor.

The chain is UPF0026 protein HP_0117 from Helicobacter pylori (strain ATCC 700392 / 26695) (Campylobacter pylori).